The primary structure comprises 696 residues: Potassium voltage-gated channel subfamily KQT member 4 (696 aa).

The tract at residues 1-20 (MAEAPPRRLGLGPPPGDAPR) is disordered. At 1-97 (MAEAPPRRLG…VYNVLERPRG (97 aa)) the chain is on the cytoplasmic side. Arg94 contacts a 1,2-diacyl-sn-glycero-3-phospho-(1D-myo-inositol-4,5-bisphosphate). Residues 98–119 (WAFVYHVFIFLLVFSCLVLSVL) form a helical membrane-spanning segment. Residues 120–130 (STIQEHQELAN) lie on the Extracellular side of the membrane. The helical transmembrane segment at 131 to 153 (ECLLILEFVMIVVFGLEYIIRVW) threads the bilayer. Residues 154–169 (SAGCCCRYRGWQGRFR) lie on the Cytoplasmic side of the membrane. Residues 170-192 (FARKPFCVIDFIVFVASVAVIAA) form a helical membrane-spanning segment. Lys173 serves as a coordination point for a 1,2-diacyl-sn-glycero-3-phospho-(1D-myo-inositol-4,5-bisphosphate). Topologically, residues 193–203 (GTQGNIFATSA) are extracellular. The helical; Voltage-sensor transmembrane segment at 204–224 (LRSMRFLQILRMVRMDRRGGT) threads the bilayer. Arg220, Arg221, Lys226, and Ser236 together coordinate a 1,2-diacyl-sn-glycero-3-phospho-(1D-myo-inositol-4,5-bisphosphate). Topologically, residues 225-236 (WKLLGSVVYAHS) are cytoplasmic. A helical transmembrane segment spans residues 237 to 259 (KELITAWYIGFLVLIFASFLVYL). Over 260 to 271 (AEKDANSDFSSY) the chain is Extracellular. An intramembrane region (pore-forming) is located at residues 272–293 (ADSLWWGTITLTTIGYGDKTPH). Thr294 is a topological domain (extracellular). The chain crosses the membrane as a helical span at residues 295 to 323 (WLGRVLAAGFALLGISFFALPAGILGSGF). Over 324 to 696 (ALKVQEQHRQ…ISRSVSTNMD (373 aa)) the chain is Cytoplasmic. A 1,2-diacyl-sn-glycero-3-phospho-(1D-myo-inositol-4,5-bisphosphate) is bound by residues His331 and Lys334. Residues 343-352 (AANLIQAAWR) form an interaction with CALM region. The interval 445–484 (SSQKRTGPSKQHLAPPPIPTSPSSEQVGEASSPSKVQKSW) is disordered. Residues 465 to 484 (SPSSEQVGEASSPSKVQKSW) show a composition bias toward polar residues. Positions 536 to 550 (RSVRILKFLVAKRKF) are interaction with CALM. The interval 547–651 (KRKFKETLRP…SRCLRSGTSA (105 aa)) is C-terminal assembly domain (tetramerization). The tract at residues 589-609 (GRGPGDRKTREKGDKGPSDTE) is disordered. Over residues 592-606 (PGDRKTREKGDKGPS) the composition is skewed to basic and acidic residues. The stretch at 610 to 645 (AVDEISMMGRVVKVEKQVQSIEHKLDLLLGFYSRCL) forms a coiled coil.

The protein belongs to the potassium channel family. KQT (TC 1.A.1.15) subfamily. Kv7.4/KCNQ4 sub-subfamily. Homotetramer. Interacts (via C-terminus) with calmodulin; forms a heterooctameric structure (with 4:4 KCNQ1:CALM stoichiometry); the interaction is calcium-independent, constitutive, participates in the proper assembly of a functional channel. The interaction with calcium-free CALM controls channel trafficking whereas interaction with calcium-bound CALM regulates channel gating. May form a functional heteromultimeric channel with KCNQ3. Interacts with HSP90AB1; promotes cell surface expression of KCNQ4. In the inner ear expressed in the outer sensory hair cells of the cochlea and in type I hair cells of the vestibular organs. Also expressed in the postsynaptic membrane of the calyx nerve endings innervating type I cells. In the brain expressed in neurons of many, but not all, nuclei of the central auditory pathway. Absent from most other brain regions.

Its subcellular location is the basal cell membrane. The enzyme catalyses K(+)(in) = K(+)(out). Its activity is regulated as follows. Two molecules of phosphatidylinositol-4,5-bisphosphate (PIP2-I and PIP2-II) are essential to activate KCNQ4 channel by inducing the coupling of the voltage-sensing domain (VSD) and the pore-forming domain (PD). Upon channel activation, PIP2-I and PIP2-II disrupt the VSD-calmodulin/CALM interaction, causing the release of CALM from the VSD which triggers the opening of the gate. Calcium suppresses KCNQ4 channel current through calcium-bound CALM C-terminus. Therefore CALM acts as calcium sensor that controls channel activity. Its function is as follows. Pore-forming subunit of the voltage-gated potassium (Kv) channel involved in the regulation of sensory cells excitability in the cochlea. KCNQ4/Kv7.4 channel is composed of 4 pore-forming subunits assembled as tetramers. Promotes the outflow of potassium ions in the repolarization phase of action potential which plays a role in regulating membrane potential of excitable cells. The channel conducts a slowly activating and deactivating current. Current often shows some inward rectification at positive potentials. Channel may be selectively permeable in vitro to other cations besides potassium, in decreasing order of affinity K(+) = Rb(+) &gt; Cs(+) &gt; Na(+). Important for normal physiological function of inner ear such as sensory perception of sound. This Mus musculus (Mouse) protein is Potassium voltage-gated channel subfamily KQT member 4.